A 489-amino-acid chain; its full sequence is MVFLIIALTLLATGARAASILAVLPTPAYSHHVVYRAYVHALVKNCHNVTVIKPQLLDYAVQDECGRVEQIDADMSAQQYKKLVASSGVFRKRGVVADETTVTADNYMGLIEMFKDQFDNANVRRFLSTNRTFDAVVVEAFADYALVFGHLFRPAPVIQIAPGYGLAENFERRRAVARHPLHYPTFGAAALTRRGGALSEWRLLNEFELLARRSDELLKQQFGKSTPTIRQLRDNVQLLLLNLHPVYDNNRPVPPSVQYLGGGLHLAQALPQRLDAPLERRLNESVDGAVYVSFGSGIDTNSIHAEFLQMLLDTFANLNNYTVLWKVDDAVAASVALPRNVLAQKWFSQTAVLRHKNVVAFVTQAGLQSSDEALQARVPMVCLPMMGDQFHHARKLQQFGVARALDTAAVSAPQLQLAIREVIADGEAYRARIDKLRAVVEHDAAPDEKAVKFTERVIKFNNDVNWPARSLKTTAANMAYSDYFVRFPL.

Residues 1–17 form the signal peptide; the sequence is MVFLIIALTLLATGARA.

The protein belongs to the UDP-glycosyltransferase family.

Catalyzes the transfer of glucose from UDP-glucose to ecdysteroids which are insect molting hormones. Expression of egt interferes with normal insect development and block molting. The protein is Ecdysteroid UDP-glucosyltransferase (EGT) of Orgyia pseudotsugata (Douglas-fir tussock moth).